The chain runs to 478 residues: ATP synthase subunit beta (478 aa).

163-170 (GGAGVGKT) provides a ligand contact to ATP.

It belongs to the ATPase alpha/beta chains family. In terms of assembly, F-type ATPases have 2 components, CF(1) - the catalytic core - and CF(0) - the membrane proton channel. CF(1) has five subunits: alpha(3), beta(3), gamma(1), delta(1), epsilon(1). CF(0) has three main subunits: a(1), b(2) and c(9-12). The alpha and beta chains form an alternating ring which encloses part of the gamma chain. CF(1) is attached to CF(0) by a central stalk formed by the gamma and epsilon chains, while a peripheral stalk is formed by the delta and b chains.

The protein localises to the cell inner membrane. The catalysed reaction is ATP + H2O + 4 H(+)(in) = ADP + phosphate + 5 H(+)(out). Its function is as follows. Produces ATP from ADP in the presence of a proton gradient across the membrane. The catalytic sites are hosted primarily by the beta subunits. This Aquifex pyrophilus protein is ATP synthase subunit beta.